A 398-amino-acid chain; its full sequence is Elongation factor Tu (398 aa).

The tr-type G domain occupies 10 to 207 (KPHVNIGTIG…TADEYIPEPE (198 aa)). Residues 19–26 (GHVDHGKT) form a G1 region. Residue 19-26 (GHVDHGKT) coordinates GTP. Thr-26 serves as a coordination point for Mg(2+). Residues 63–67 (GITIN) are G2. A G3 region spans residues 84–87 (DAPG). GTP contacts are provided by residues 84 to 88 (DAPGH) and 139 to 142 (NKID). The interval 139 to 142 (NKID) is G4. Residues 177–179 (SAL) form a G5 region.

This sequence belongs to the TRAFAC class translation factor GTPase superfamily. Classic translation factor GTPase family. EF-Tu/EF-1A subfamily. In terms of assembly, monomer.

The protein resides in the cytoplasm. The catalysed reaction is GTP + H2O = GDP + phosphate + H(+). Functionally, GTP hydrolase that promotes the GTP-dependent binding of aminoacyl-tRNA to the A-site of ribosomes during protein biosynthesis. The chain is Elongation factor Tu from Streptococcus uberis (strain ATCC BAA-854 / 0140J).